The primary structure comprises 576 residues: K(+)/H(+) antiporter NhaP2 (576 aa).

13 consecutive transmembrane segments (helical) span residues 6–26, 34–54, 58–78, 87–107, 109–129, 163–183, 185–205, 219–239, 242–262, 271–291, 299–319, 335–355, and 359–379; these read INSF…LSPM, ILLI…GGIL, YSTA…DGGM, VALW…TSIT, MMAA…GAIV, PMAV…DTEM, FSFM…LGLG, LADG…YAAS, LGGS…NKPT, VLDG…GLLL, ILIP…PVAV, WFIS…VFPM, and LPGA…SLLV. One can recognise an RCK C-terminal domain in the interval 405 to 486; that stretch reads SGVEIYPSSE…LEALSNLFSQ (82 aa).

This sequence belongs to the monovalent cation:proton antiporter 1 (CPA1) transporter (TC 2.A.36) family. NhaP2 subfamily.

It is found in the cell inner membrane. The enzyme catalyses K(+)(in) + H(+)(out) = K(+)(out) + H(+)(in). In terms of biological role, k(+)/H(+) antiporter that extrudes potassium in exchange for external protons and maintains the internal concentration of potassium under toxic levels. The sequence is that of K(+)/H(+) antiporter NhaP2 from Shewanella baltica (strain OS223).